A 1027-amino-acid polypeptide reads, in one-letter code: Presequence protease, mitochondrial (1027 aa).

A mitochondrion-targeting transit peptide spans 1 to 22 (MIRQCWAGLRLCRALYQTSYRW). Zn(2+) is bound at residue His-98. The active-site Proton acceptor is the Glu-101. Residues His-102 and Glu-199 each contribute to the Zn(2+) site. An intrachain disulfide couples Cys-113 to Cys-550. The tract at residues 803 to 827 (RKAIRPHVVEKSSNPSPSGSEISRT) is disordered. Over residues 814–825 (SSNPSPSGSEIS) the composition is skewed to low complexity.

Belongs to the peptidase M16 family. PreP subfamily. Monomer and homodimer; homodimerization is induced by binding of the substrate. Requires Zn(2+) as cofactor. Post-translationally, a disulfide bond locks the enzyme in the closed conformation preventing substrate entry into the catalytic chamber.

It localises to the mitochondrion matrix. With respect to regulation, mainly exists in a closed and catalytically competent conformation but a closed-to-open switch allows substrate entry into the catalytic chamber. Substrate binding induces closure and dimerization. A disulfide bond may lock the enzyme in a closed conformation preventing substrate entry into the catalytic chamber, participating in redox regulation of the enzyme. Inhibited by metal-chelating agents. Inhibited by nickel and zinc excess, and slightly activated by manganese. In terms of biological role, metalloendopeptidase of the mitochondrial matrix that functions in peptide cleavage and degradation rather than in protein processing. Has an ATP-independent activity. Specifically cleaves peptides in the range of 5 to 65 residues. Shows a preference for cleavage after small polar residues and before basic residues, but without any positional preference. Degrades the transit peptides of mitochondrial proteins after their cleavage. Also degrades other unstructured peptides. The sequence is that of Presequence protease, mitochondrial (pitrm1) from Xenopus laevis (African clawed frog).